Consider the following 1665-residue polypeptide: Protein scribble homolog (1665 aa).

The sufficient for targeting to adherens junction and to inhibit cell proliferation stretch occupies residues 1 to 804 (MLKCIPLWRC…MRVWRERMVE (804 aa)). A Phosphoserine modification is found at Ser37. LRR repeat units lie at residues 37–58 (SLEE…FFRL), 60–81 (NLRK…VANF), 83–104 (QLVE…IKFC), 106–127 (ALEI…FTQL), 129–150 (SLAH…VGNL), 152–174 (NLVT…SFLV), 175–197 (KLEQ…GALP), 198–219 (NLRE…LGNL), 221–243 (RLVC…GGLA), 244–265 (LLTD…IGQL), 267–288 (QLSI…IGDC), 290–312 (NLSE…GKLT), 313–334 (KLTN…IGGC), 336–357 (ALSV…LAHT), 359–381 (ELHV…THLN), and 382–402 (LKAL…QTED). Thr378 carries the phosphothreonine modification. 2 disordered regions span residues 422-615 (PSLE…HFKI) and 635-689 (REGP…SAPS). Residues 428 to 437 (GQQSSPSESC) show a composition bias toward polar residues. Acidic residues predominate over residues 452 to 463 (DTLEGEEDAEEA). Residues 455-475 (EGEEDAEEAAAEKRGLQRRAT) adopt a coiled-coil conformation. At Thr475 the chain carries Phosphothreonine. Composition is skewed to basic and acidic residues over residues 479-494 (SELK…RRNE) and 570-580 (FAEDTLIPRED). Ser583 carries the post-translational modification Phosphoserine. Residues 653–687 (RAHEEEEEEEEENRDEEEGEATTEEDDKEEAVASA) adopt a coiled-coil conformation. The segment covering 657-681 (EEEEEEEENRDEEEGEATTEEDDKE) has biased composition (acidic residues). Phosphothreonine is present on residues Thr674 and Thr675. Phosphoserine is present on residues Ser694 and Ser750. The interval 703-1215 (IEPARIEEEE…SLESISSIDR (513 aa)) is interaction with ARHGEF7. Residues 714–801 (TLTIVRQTGG…AVQMRVWRER (88 aa)) enclose the PDZ 1 domain. A required for interaction with VIM region spans residues 714–1180 (TLTIVRQTGG…TVLVCDGFDT (467 aa)). The residue at position 812 (Thr812) is a Phosphothreonine. Ser821, Ser861, and Ser925 each carry phosphoserine. PDZ domains follow at residues 848 to 936 (AACL…ERET), 990 to 1079 (EICL…RRDP), and 1086 to 1180 (ELCI…GFDT). Phosphoserine occurs at positions 1126, 1206, 1209, 1212, 1218, 1262, 1265, and 1284. A compositionally biased stretch (basic and acidic residues) spans 1213-1228 (IDRELSPEGPGKEKEL). The interval 1213-1246 (IDRELSPEGPGKEKELASQALPWESESAETTGRN) is disordered. Disordered stretches follow at residues 1263-1325 (AGSL…DELP) and 1341-1501 (VHPP…AERR). Residues 1264–1277 (GSLQRGPSATTGGK) show a composition bias toward polar residues. Lys1291 carries the omega-N-methylarginine modification. At Ala1299 the chain carries Phosphoserine. Arg1312 bears the Omega-N-methylarginine mark. Ser1320 carries the post-translational modification Phosphoserine. A Phosphothreonine modification is found at Thr1353. Ser1359 bears the Phosphoserine mark. The segment covering 1364–1376 (SFRERQKYFELEV) has biased composition (basic and acidic residues). Ser1389 is subject to Phosphoserine. The stretch at 1390–1421 (LVGADDLRKMQEEEARKLQQKRAQMLREEAVT) forms a coiled coil. Residues 1394–1406 (DDLRKMQEEEARK) show a composition bias toward basic and acidic residues. Phosphoserine is present on residues Ser1455 and Ser1458. A compositionally biased stretch (basic and acidic residues) spans 1471-1482 (AKAERRHQERLR). Ser1485, Ser1496, and Ser1518 each carry phosphoserine. The interval 1530 to 1577 (LSKSQEGRGKRGPLERLAEAPSPAPTPSPTPLEDFGLQTSASPGRLPL) is disordered. Basic and acidic residues predominate over residues 1534–1547 (QEGRGKRGPLERLA). Position 1551 is a phosphoserine (Ser1551). Thr1555 carries the post-translational modification Phosphothreonine. Phosphoserine occurs at positions 1557, 1571, and 1601. The disordered stretch occupies residues 1632–1665 (GRPSPGAVGPEDMTLCSSRRSVRPGRRGLGPVPS).

The protein belongs to the LAP (LRR and PDZ) protein family. In terms of assembly, interacts with UBE3A. Interacts with PAK1 and PAK2. Interacts (via PDZ domains) with VANGL2. Interacts (via PDZ domains) with LPP and TRIP6; the interaction is direct. Interacts (via PDZ domains) with TJP2. Interacts (via PDZ domains) with APC; may mediate APC targeting to adherens junctions of epithelial cells. Interacts (via PDZ domains) with TSHR; regulates TSHR trafficking and function. Interacts with ARHGEF7 and GIT1; interacts directly with ARHGEF7. Interacts with CTNNB1. Interacts with MAPK12. Interacts (via PDZ domains 1 and 3) with MCC. Interacts with DLG5. Interacts with STK4/MST1 and LATS1 in the presence of DLG5. Interacts (via PDZ domain 3) with CRTAM (via PDZ-binding motif); the interaction promotes CRTAM and SCRIB polarization in a subset of CD4+ T-cells. Interacts with YES1, when YES1 is in a closed conformation; the interaction facilitates YES1 autophosphorylation. Interacts (via PDZ domains) with VIM; the interaction protects SCRIB from proteasomal degradation and facilitates SCRIB localization to intermediate filaments, the interaction is reduced by cell contact inhibition. Post-translationally, ubiquitinated; targeted for UBE3A-dependent multiubiquitination and degraded. In terms of processing, palmitoylated. Could be depalmitoylated by LYPLA1 and/or LYPLA2. Palmitoylation of SCRIB by ZDHHC7 is required for its localization to cell-cell junctions, function in the establishement of epithelial cell polarity and the regulation of downstream signaling pathways important for epithelial cell differentiation. Expressed in CD4+ T-cells (at protein level). Found in a wide range of tissues including liver, kidney and spleen. Also expressed in the brain (at protein level).

The protein resides in the cell membrane. Its subcellular location is the cell junction. It is found in the adherens junction. It localises to the cell projection. The protein localises to the lamellipodium. The protein resides in the cytoplasm. Its subcellular location is the postsynapse. It is found in the presynapse. In terms of biological role, scaffold protein involved in different aspects of polarized cell differentiation regulating epithelial and neuronal morphogenesis and T-cell polarization. Via its interaction with CRTAM, required for the late phase polarization of a subset of CD4+ T-cells, which in turn regulates TCR-mediated proliferation and IFNG and IL22 production. Plays a role in cell directional movement, cell orientation, cell sheet organization and Golgi complex polarization at the cell migration front. Promotes epithelial cell layer barrier function via maintaining cell-cell adhesion. Most probably functions in the establishment of apico-basal cell polarity. May function in cell proliferation regulating progression from G1 to S phase and as a positive regulator of apoptosis for instance during acinar morphogenesis of the mammary epithelium. May regulate cell invasion via MAPK-mediated cell migration and adhesion. May play a role in exocytosis and in the targeting of synaptic vesicles to synapses. Functions as an activator of Rac GTPase activity. This is Protein scribble homolog from Mus musculus (Mouse).